Reading from the N-terminus, the 1601-residue chain is Ras guanine nucleotide exchange factor glfB (1601 aa).

Disordered stretches follow at residues 43–140, 188–256, 310–461, and 475–630; these read PLLA…KEWD, DLLI…TTTT, SPQR…APDS, and LTTT…VKKG. Residues 45–55 show a composition bias toward pro residues; that stretch reads LAPPAPPPPPT. Polar residues predominate over residues 57–69; it reads QEINIGSGNSTFI. Residues 70-126 show a composition bias toward low complexity; it reads SSNNNNSNNNNNNNSNNNNNNNLNNSNNNNNNLNSNNNNNNNNNNNNNNGNNNNNSN. S197 bears the Phosphoserine mark. T201 carries the post-translational modification Phosphothreonine. Composition is skewed to low complexity over residues 211 to 256 and 310 to 330; these read QQQQ…TTTT and SPQRVTTTTTTTTPSTGGVVV. Acidic residues predominate over residues 331-359; sequence ADEESDSSEEESDSSEEESDEYTDEESET. Residues 384-398 are compositionally biased toward polar residues; the sequence is PLTSVNSNDNTSSGT. 3 stretches are compositionally biased toward low complexity: residues 435-458, 475-493, and 500-520; these read TAVAASSISATTNVTSAASTTTVA, LTTTTSATSSTTSATTQSI, and SQQRAAQSISTSSVTPAAITK. Residues 521 to 533 show a composition bias toward basic and acidic residues; the sequence is PTKDAKDKKDPAK. The segment covering 558–577 has biased composition (low complexity); sequence VPTGTSPPVSSSTSISSSTG. Over residues 578 to 596 the composition is skewed to basic and acidic residues; that stretch reads IKKDKVKLSKEEKDRIKKE. Residues 649–836 enclose the Rho-GAP domain; sequence VRLTQLVLSN…LIIDNYVFLF (188 aa). Positions 851–983 constitute an N-terminal Ras-GEF domain; the sequence is GKMIISEGSI…TINDFLKLPK (133 aa). A Ras-GEF domain is found at 1021 to 1255; sequence SAMEIAEQCT…ADLSLKCEPP (235 aa). The segment at 1262–1601 is N-terminal F-actin-binding domain; sequence YNAPADIVDE…QESVPSTNAE (340 aa). The interval 1443-1474 is disordered; the sequence is SNVEKEKLSSSQEQQEQQEQKQQEQQQQQQEP. Residues 1465 to 1474 show a composition bias toward low complexity; it reads QEQQQQQQEP.

Interacts with gpaB and rapA. Interacts directly with F-actin. In terms of processing, simultaneously phosphorylated at Ser-197 and Thr-201 after cAMP stimulation.

The protein localises to the cytoplasm. It is found in the cell cortex. Its subcellular location is the cytoskeleton. It localises to the cell projection. The protein resides in the filopodium. The protein localises to the lamellipodium. Functionally, gpaB-activated, rapA-specific guanine nucleotide exchange factor, involved in the regulation of the balance between Ras and Rap signaling at the leading edge of chemotaxing cells. Spatially localized activation of Rap and Ras induces F-actin polymerization at the leading edge of chemotaxing cells through the Rac, PI3K, and TORC2 pathways. Also acts as a key regulator of actin-driven membrane protrusions during processes such as phagocytosis and cytokinesis, possibly by modulating rapA signaling pathways. The chain is Ras guanine nucleotide exchange factor glfB from Dictyostelium discoideum (Social amoeba).